The sequence spans 377 residues: MTKKRVALIFGGNSSEHDVSKRSAQNFYNAIEATGKYEIIVFAIAQNGFFLDTESSKKILALEDEQPIVDAFMKTVDASDPLARIHALKSAGDFDIFFPVVHGNLGEDGTLQGLFKLLDKPYVGAPLRGHAVSFDKALTKELLTVNGIRNTKYIVVDPESANNWSWDKIVAELGNIVFVKAANQGSSVGISRVTNAEEYTEALSDSFQYDYKVLIEEAVNGARELEVGVIGNDQPLVSEIGAHTVPNQGSGDGWYDYNNKFVDNSAVHFEIPAQLSPEVTKEVKQMALDAYKVLNLRGEARMDFLLDENNVPYLGEPNTLPGFTNMSLFKRLWDYSDINNAKLVDMLIDYGFEDFAQNKKLSYSFVSLGEEKIGKFN.

The ATP-grasp domain maps to 140–349 (KELLTVNGIR…NAKLVDMLID (210 aa)). An ATP-binding site is contributed by 170–225 (VAELGNIVFVKAANQGSSVGISRVTNAEEYTEALSDSFQYDYKVLIEEAVNGAREL). Aspartate 303, glutamate 316, and asparagine 318 together coordinate Mg(2+).

It belongs to the D-alanine--D-alanine ligase family. Mg(2+) is required as a cofactor. Mn(2+) serves as cofactor.

The protein resides in the cytoplasm. It catalyses the reaction 2 D-alanine + ATP = D-alanyl-D-alanine + ADP + phosphate + H(+). It functions in the pathway cell wall biogenesis; peptidoglycan biosynthesis. In terms of biological role, cell wall formation. The sequence is that of D-alanine--D-alanine ligase from Leuconostoc mesenteroides subsp. mesenteroides (strain ATCC 8293 / DSM 20343 / BCRC 11652 / CCM 1803 / JCM 6124 / NCDO 523 / NBRC 100496 / NCIMB 8023 / NCTC 12954 / NRRL B-1118 / 37Y).